The chain runs to 1627 residues: Surface protein G (1627 aa).

Positions 1 to 50 (MRDKKGPVNKRVDFLSNKLNKYSIRKFTVGTASILIGSLMYLGTQQEAEA) are cleaved as a signal peptide. The YSIRK-G/S signaling motif motif lies at 22–33 (YSIRKFTVGTAS). The interval 51 to 418 (AENNIENPTT…KGSEFTFTPE (368 aa)) is ligand binding A region, squamous nasal epithelial cell binding. Disordered stretches follow at residues 74-143 (EVTN…VRKA), 440-467 (KFNPDLAPGTEKVTREGQKGEKTITTPT), and 496-1601 (EYGP…TGLE). Composition is skewed to basic and acidic residues over residues 96-120 (DTIEHEPSVKAEDISKKEDTPKEVA), 451-461 (KVTREGQKGEK), 505-523 (GHRDEFDPKLPTGEKEEVP), 554-570 (SIVEKEEIPFEKERKFN), 579-589 (KVTREGQKGEK), 606-619 (SKGESKEEITKDPI), 633-651 (GHRDEFDPKLPTGEKEEVP), 682-698 (SIVEKEEIPFEKERKFN), 707-717 (KVTREGQKGEK), 736-747 (GEPKEEITKDPI), 761-779 (GHRDEFDPKLPTGEKEEVP), 810-826 (SIVEKEEIPFKKERKFN), 835-845 (KVTREGQKGEK), 862-875 (SKGESKEEITKDPI), 889-907 (GHRDEFDPKLPTGEKEEVP), 938-954 (SIVEKEEIPFEKERKFN), 963-973 (KVTREGQKGEK), 990-1003 (SKGESKEEITKDPI), 1017-1035 (GHRDEFDPKLPTGEKEEVP), 1066-1082 (SIVEKEEIPFKKERKFN), 1091-1101 (KVTREGQKGEK), 1118-1131 (SKGESKEEITKDPI), 1145-1163 (GHRDEFDPKLPTGEKEEVP), 1194-1210 (SIVEKEEIPFEKERKFN), 1219-1229 (KVTREGQKGEK), 1246-1259 (SKGESKEEITKDPI), 1273-1291 (GHRDEFDPKLPTGEKEEVP), 1322-1338 (SIVEKEEIPFEKERKFN), 1347-1357 (KVTREGQKGEK), 1374-1387 (SKGESKEEITKDPV), 1431-1442 (KVIEEPVDDVIK), and 1459-1478 (FETKREFNPKLQPGEERVKQ). In terms of domain architecture, G5 1 spans 419–501 (APKTITELEK…NELTEYGPET (83 aa)). Positions 547 to 629 (YGPVKGDSIV…NELTEYGPET (83 aa)) constitute a G5 2 domain. The G5 3 domain occupies 675–757 (YGPVKGDSIV…NELTEYGPET (83 aa)). The 83-residue stretch at 803–885 (YGPVKGDSIV…NELTEYGPET (83 aa)) folds into the G5 4 domain. Positions 931-1013 (YGPVKGDSIV…NELTEYGPET (83 aa)) constitute a G5 5 domain. Residues 1059–1141 (YGPVKGDSIV…NELTEYGPET (83 aa)) enclose the G5 6 domain. In terms of domain architecture, G5 7 spans 1187 to 1269 (YGPVKGDSIV…NELTEYGPET (83 aa)). The 83-residue stretch at 1315–1397 (YGPVKGDSIV…NELTEFGGEK (83 aa)) folds into the G5 8 domain. The region spanning 1443–1525 (HGPKTGTPET…DKIVEFGGEK (83 aa)) is the G5 9 domain. A compositionally biased stretch (polar residues) spans 1481–1495 (QPGSKTITTPITVNP). Over residues 1509-1539 (EITKQPVDKIVEFGGEKPKDPKGPENPEKPS) the composition is skewed to basic and acidic residues. The LPXTG sorting signal motif lies at 1595 to 1599 (LPKTG). A Pentaglycyl murein peptidoglycan amidated threonine modification is found at threonine 1598. Positions 1599–1627 (GLESTQKGLIFSSIIGIAGLMLLARRRKN) are cleaved as a propeptide — removed by sortase.

The protein localises to the secreted. Its subcellular location is the cell wall. Promotes adhesion of bacterial cells to human squamous nasal epithelial cells, a phenomenon which is likely to be important in nasal colonization. Forms short, extremely dense and thin fibrils all over the bacterial surface. Does not bind to either buccal cells or non-differentiated keratinocytes. Promotes cellular aggregation leading to biofilm formation. This Staphylococcus aureus (strain NCTC 8325 / PS 47) protein is Surface protein G (sasG).